The sequence spans 342 residues: Phomopsin biosynthesis cluster protein B' (342 aa).

A disordered region spans residues 1–22 (MESIAKAKSLPNKGRTYDSQRP). The helical transmembrane segment at 87–107 (VLIIGCAVISLFAIIGALGFA) threads the bilayer. A disordered region spans residues 118–186 (CASPAHQNPH…QCGESPDEAQ (69 aa)). A compositionally biased stretch (low complexity) spans 144–155 (HSGSHSSSSSTN). Asn248 carries N-linked (GlcNAc...) asparagine glycosylation.

It localises to the membrane. Part of the gene cluster that mediates the biosynthesis of the phomopsins, a group of hexapeptide mycotoxins which infects lupins and causes lupinosis disease in livestock. The role of phomB' within the phomopsins biosynthesis pathway has still to be determined. The pathway starts with the processing of the precursor phomA by several endopeptidases including kexin proteases as well as the cluster-specific S41 family peptidase phomP1 and the oligopeptidase phomG to produce 10 identical copies of the hexapeptide Tyr-Val-Ile-Pro-Ile-Asp. After being excised from the precursor peptide, the core peptides are cyclized and modified post-translationally by enzymes encoded within the gene cluster. The timing and order of proteolysis of the phomA precursor and PTMs are still unknown. Two tyrosinase-like enzymes, phomQ1 and phomQ2, catalyze the chlorination and hydroxylation of Tyr, respectively. PhomYb, is proposed to be involved in the construction of the macrocyclic structure. The other 4 ustYa family proteins may be involved in PTMs that generate the unique structure of phomopsin A. PhomYa is required for the hydroxylation of C-beta of Tyr. PhomYc, phomYd, and phomYe are responsible for the biosynthesis of 2,3-dehydroisoleucine (dIle), 2,3-dehydroaspartic acid (dAsp), and 3,4-dehydroproline (dPro), respectively. While dIle formation by phomYc is indispensable for the installation of dAsp by phomYd, the order of the other PTMs have not been elucidated yet. Most of the biosynthetic enzymes likely have broad substrate specificity, and thus, there might be a metabolic grid from a precursor to phomopsin A. The enzyme(s) responsible for the biosynthesis of 3,4-dehydrovaline (dVal) have also not been identified yet. Finally, phomM acts as an S-adenosylmethionine-dependent alpha-N-methyltransferase that catalyzes two successive N-methylation reactions, converting N-desmethyl-phomopsin A to phomopsin A and phomopsin A further to an N,N-dimethylated congener called phomopsin E. This is Phomopsin biosynthesis cluster protein B' from Diaporthe leptostromiformis (Lupinosis disease fungus).